We begin with the raw amino-acid sequence, 466 residues long: UDP-N-acetylmuramoylalanine--D-glutamate ligase (466 aa).

127–133 (GSNGKST) provides a ligand contact to ATP.

Belongs to the MurCDEF family.

Its subcellular location is the cytoplasm. The catalysed reaction is UDP-N-acetyl-alpha-D-muramoyl-L-alanine + D-glutamate + ATP = UDP-N-acetyl-alpha-D-muramoyl-L-alanyl-D-glutamate + ADP + phosphate + H(+). The protein operates within cell wall biogenesis; peptidoglycan biosynthesis. In terms of biological role, cell wall formation. Catalyzes the addition of glutamate to the nucleotide precursor UDP-N-acetylmuramoyl-L-alanine (UMA). This chain is UDP-N-acetylmuramoylalanine--D-glutamate ligase, found in Ruegeria pomeroyi (strain ATCC 700808 / DSM 15171 / DSS-3) (Silicibacter pomeroyi).